A 488-amino-acid polypeptide reads, in one-letter code: 3-octaprenyl-4-hydroxybenzoate carboxy-lyase (488 aa).

Asn172 is a Mn(2+) binding site. Prenylated FMN is bound by residues 175–177 (IYR), 189–191 (RWL), and 194–195 (RG). A Mn(2+)-binding site is contributed by Glu238. The active-site Proton donor is the Asp287.

Belongs to the UbiD family. As to quaternary structure, homohexamer. Prenylated FMN serves as cofactor. The cofactor is Mn(2+).

The protein localises to the cell membrane. It carries out the reaction a 4-hydroxy-3-(all-trans-polyprenyl)benzoate + H(+) = a 2-(all-trans-polyprenyl)phenol + CO2. The protein operates within cofactor biosynthesis; ubiquinone biosynthesis. Functionally, catalyzes the decarboxylation of 3-octaprenyl-4-hydroxy benzoate to 2-octaprenylphenol, an intermediate step in ubiquinone biosynthesis. This chain is 3-octaprenyl-4-hydroxybenzoate carboxy-lyase, found in Pseudomonas putida (strain W619).